The primary structure comprises 124 residues: Small ribosomal subunit protein uS12c (124 aa).

The segment at Met1–Pro28 is disordered. The span at Ser10–Lys20 shows a compositional bias: basic residues.

The protein belongs to the universal ribosomal protein uS12 family. In terms of assembly, part of the 30S ribosomal subunit.

The protein localises to the plastid. Its function is as follows. With S4 and S5 plays an important role in translational accuracy. Located at the interface of the 30S and 50S subunits. The chain is Small ribosomal subunit protein uS12c (rps12) from Prototheca wickerhamii.